Consider the following 275-residue polypeptide: Dermonecrotic toxin SpeSicTox-betaIIA2iii (275 aa).

Histidine 5 is an active-site residue. Mg(2+) is bound by residues glutamate 25 and aspartate 27. The active-site Nucleophile is the histidine 41. 2 disulfides stabilise this stretch: cysteine 45-cysteine 51 and cysteine 47-cysteine 190. Aspartate 85 is a binding site for Mg(2+).

The protein belongs to the arthropod phospholipase D family. Class II subfamily. Mg(2+) serves as cofactor. Expressed by the venom gland.

The protein localises to the secreted. The catalysed reaction is an N-(acyl)-sphingosylphosphocholine = an N-(acyl)-sphingosyl-1,3-cyclic phosphate + choline. The enzyme catalyses an N-(acyl)-sphingosylphosphoethanolamine = an N-(acyl)-sphingosyl-1,3-cyclic phosphate + ethanolamine. It catalyses the reaction a 1-acyl-sn-glycero-3-phosphocholine = a 1-acyl-sn-glycero-2,3-cyclic phosphate + choline. It carries out the reaction a 1-acyl-sn-glycero-3-phosphoethanolamine = a 1-acyl-sn-glycero-2,3-cyclic phosphate + ethanolamine. In terms of biological role, dermonecrotic toxins cleave the phosphodiester linkage between the phosphate and headgroup of certain phospholipids (sphingolipid and lysolipid substrates), forming an alcohol (often choline) and a cyclic phosphate. This toxin acts on sphingomyelin (SM). It may also act on ceramide phosphoethanolamine (CPE), lysophosphatidylcholine (LPC) and lysophosphatidylethanolamine (LPE), but not on lysophosphatidylserine (LPS), and lysophosphatidylglycerol (LPG). It acts by transphosphatidylation, releasing exclusively cyclic phosphate products as second products. Induces dermonecrosis, hemolysis, increased vascular permeability, edema, inflammatory response, and platelet aggregation. In Sicarius peruensis (Six-eyed sand spider), this protein is Dermonecrotic toxin SpeSicTox-betaIIA2iii.